A 141-amino-acid chain; its full sequence is Hemoglobin subunit alpha-D (141 aa).

Positions 1–141 (MLGAEETALV…VAAVLAEKYR (141 aa)) constitute a Globin domain. Residues His-58 and His-87 each coordinate heme b.

This sequence belongs to the globin family. Heterotetramer of two alpha-D chains and two beta chains. In terms of tissue distribution, red blood cells.

Involved in oxygen transport from the lung to the various peripheral tissues. This is Hemoglobin subunit alpha-D (HBAD) from Phalacrocorax carbo (Great cormorant).